Reading from the N-terminus, the 191-residue chain is MNENDKMKIKEVIVVEGKDDTKRIQMAVNADTLETRGSAISDETLDQIEDLYDKRGVIVFTDPDFSGEKIRKIITEAVPGVKHAFLTKHDAAPSHKGSLGVEHASPEAIREALAHLYTEVPDGEPLISREDLAVAGLTSGPQAKEYRRRLGEYLRIGYTNGKQLYKRLKLFQITPDELKKALEYIKNEDNY.

The Toprim domain occupies 10–93 (KEVIVVEGKD…AFLTKHDAAP (84 aa)). 3 residues coordinate Mg(2+): E16, D62, and D64.

This sequence belongs to the ribonuclease M5 family. Mg(2+) serves as cofactor.

It localises to the cytoplasm. It carries out the reaction Endonucleolytic cleavage of RNA, removing 21 and 42 nucleotides, respectively, from the 5'- and 3'-termini of a 5S-rRNA precursor.. In terms of biological role, required for correct processing of both the 5' and 3' ends of 5S rRNA precursor. Cleaves both sides of a double-stranded region yielding mature 5S rRNA in one step. This Ligilactobacillus salivarius (strain CECT 5713) (Lactobacillus salivarius) protein is Ribonuclease M5 1.